We begin with the raw amino-acid sequence, 119 residues long: Large ribosomal subunit protein uL22 (119 aa).

It belongs to the universal ribosomal protein uL22 family. As to quaternary structure, part of the 50S ribosomal subunit.

Functionally, this protein binds specifically to 23S rRNA; its binding is stimulated by other ribosomal proteins, e.g. L4, L17, and L20. It is important during the early stages of 50S assembly. It makes multiple contacts with different domains of the 23S rRNA in the assembled 50S subunit and ribosome. Its function is as follows. The globular domain of the protein is located near the polypeptide exit tunnel on the outside of the subunit, while an extended beta-hairpin is found that lines the wall of the exit tunnel in the center of the 70S ribosome. The sequence is that of Large ribosomal subunit protein uL22 from Tropheryma whipplei (strain TW08/27) (Whipple's bacillus).